Here is a 371-residue protein sequence, read N- to C-terminus: uncharacterized protein (371 aa).

33 to 40 is a binding site for ATP; sequence GPLNSGKT.

It belongs to the archaeal ATPase family.

This is an uncharacterized protein from Methanocaldococcus jannaschii (strain ATCC 43067 / DSM 2661 / JAL-1 / JCM 10045 / NBRC 100440) (Methanococcus jannaschii).